Reading from the N-terminus, the 316-residue chain is Petrobactin import system permease protein YclN (316 aa).

Helical transmembrane passes span 5–25, 49–69, 94–114, 133–153, 181–201, 224–244, 268–288, and 290–310; these read YLFI…VEDL, LISI…MQQI, LLLF…VFAL, IFIP…ATFI, LLYL…KFTL, LIIV…LPFL, VLLG…IIFP, and EISI…FMLL.

Belongs to the binding-protein-dependent transport system permease family. FecCD subfamily. As to quaternary structure, the complex is composed of two ATP-binding proteins (YclP), two transmembrane proteins (YclN and YclO) and a solute-binding protein (YclQ).

The protein localises to the cell membrane. Functionally, part of the ABC transporter complex YclNOPQ involved in uptake of ferric-petrobactin. Petrobactin is a photoreactive 3,4-catecholate siderophore produced by many members of the B.cereus group, including B.anthracis. Probably responsible for the translocation of the substrate across the membrane. The protein is Petrobactin import system permease protein YclN (yclN) of Bacillus subtilis (strain 168).